The chain runs to 155 residues: Small ribosomal subunit protein uS7 (155 aa).

This sequence belongs to the universal ribosomal protein uS7 family. As to quaternary structure, part of the 30S ribosomal subunit. Contacts proteins S9 and S11.

Functionally, one of the primary rRNA binding proteins, it binds directly to 16S rRNA where it nucleates assembly of the head domain of the 30S subunit. Is located at the subunit interface close to the decoding center, probably blocks exit of the E-site tRNA. The polypeptide is Small ribosomal subunit protein uS7 (Mycoplasmoides gallisepticum (strain R(low / passage 15 / clone 2)) (Mycoplasma gallisepticum)).